The sequence spans 533 residues: Probable bifunctional tRNA threonylcarbamoyladenosine biosynthesis protein (533 aa).

The kae1 stretch occupies residues 1 to 328 (MRILGIEGTA…FRPDAVTVTW (328 aa)). Fe cation is bound by residues His-112 and His-116. L-threonylcarbamoyladenylate is bound by residues 133-137 (NASGA), Asp-165, Gly-178, Glu-182, and Asn-261. Residue Asp-289 participates in Fe cation binding. The region spanning 339 to 533 (PATLDKTPVR…RDIESRGRYH (195 aa)) is the Protein kinase domain. Residues 347-354 (VRGAEAIV) and Lys-363 each bind ATP. Catalysis depends on Asp-452, which acts as the Proton acceptor; for kinase activity.

In the N-terminal section; belongs to the KAE1 / TsaD family. This sequence in the C-terminal section; belongs to the protein kinase superfamily. Tyr protein kinase family. BUD32 subfamily. In terms of assembly, component of the KEOPS complex that consists of Kae1, Bud32, Cgi121 and Pcc1; the whole complex dimerizes. Fe(2+) is required as a cofactor.

Its subcellular location is the cytoplasm. It catalyses the reaction L-seryl-[protein] + ATP = O-phospho-L-seryl-[protein] + ADP + H(+). The enzyme catalyses L-threonyl-[protein] + ATP = O-phospho-L-threonyl-[protein] + ADP + H(+). The catalysed reaction is L-threonylcarbamoyladenylate + adenosine(37) in tRNA = N(6)-L-threonylcarbamoyladenosine(37) in tRNA + AMP + H(+). Functionally, required for the formation of a threonylcarbamoyl group on adenosine at position 37 (t(6)A37) in tRNAs that read codons beginning with adenine. Is a component of the KEOPS complex that is probably involved in the transfer of the threonylcarbamoyl moiety of threonylcarbamoyl-AMP (TC-AMP) to the N6 group of A37. The Kae1 domain likely plays a direct catalytic role in this reaction. The Bud32 domain probably displays kinase activity that regulates Kae1 function. In Haloquadratum walsbyi (strain DSM 16790 / HBSQ001), this protein is Probable bifunctional tRNA threonylcarbamoyladenosine biosynthesis protein.